Consider the following 444-residue polypeptide: Type VII secretion system protein EssB (444 aa).

The Cytoplasmic portion of the chain corresponds to 1 to 229 (MVKNHNPKNE…RKVGHTVFKW (229 aa)). A helical membrane pass occupies residues 230-250 (VAIGMTTLSVLLIAFLAFLYF). At 251 to 444 (SVMKHNERIE…EKRQEAERKK (194 aa)) the chain is on the extracellular side. Positions 366 to 444 (KNNGDLSNDK…EKRQEAERKK (79 aa)) are disordered. Residues 372–444 (SNDKRSEETK…EKRQEAERKK (73 aa)) are compositionally biased toward basic and acidic residues. Positions 387-443 (LQDILDKEKQVKDEKAKSEEEKAKAKDEKLKQQEENEKKQKEQAQKDKEKRQEAERK) form a coiled coil.

The protein belongs to the EssB family. As to quaternary structure, may oligomerize and interact with other membrane components to form the Ess system. Interacts with EsaA.

The protein resides in the cell membrane. Functionally, component of the type VII secretion system (Ess). Required for the secretion of EsxA and proper accumulation of EssB and EssD. The protein is Type VII secretion system protein EssB of Staphylococcus aureus (strain USA300).